The chain runs to 226 residues: Phosphoglycolate phosphatase (226 aa).

The active-site Nucleophile is Asp-5. Mg(2+) is bound by residues Asp-5 and Asp-7. Lys-142 contacts substrate. Mg(2+)-binding residues include Asp-164 and Asp-168.

Belongs to the archaeal SPP-like hydrolase family. It depends on Mg(2+) as a cofactor.

It catalyses the reaction 2-phosphoglycolate + H2O = glycolate + phosphate. Catalyzes the dephosphorylation of 2-phosphoglycolate. The protein is Phosphoglycolate phosphatase of Sulfurisphaera tokodaii (strain DSM 16993 / JCM 10545 / NBRC 100140 / 7) (Sulfolobus tokodaii).